The primary structure comprises 430 residues: Trigger factor (430 aa).

Positions 163-248 (GDTVVFDFAG…IHEIKAQELP (86 aa)) constitute a PPIase FKBP-type domain.

The protein belongs to the FKBP-type PPIase family. Tig subfamily.

The protein resides in the cytoplasm. It catalyses the reaction [protein]-peptidylproline (omega=180) = [protein]-peptidylproline (omega=0). Involved in protein export. Acts as a chaperone by maintaining the newly synthesized protein in an open conformation. Functions as a peptidyl-prolyl cis-trans isomerase. The chain is Trigger factor from Exiguobacterium sibiricum (strain DSM 17290 / CCUG 55495 / CIP 109462 / JCM 13490 / 255-15).